The chain runs to 268 residues: Putative hydro-lyase ABAYE2440 (268 aa).

The protein belongs to the D-glutamate cyclase family.

The protein is Putative hydro-lyase ABAYE2440 of Acinetobacter baumannii (strain AYE).